Here is a 305-residue protein sequence, read N- to C-terminus: Ribosomal protein L11 methyltransferase (305 aa).

S-adenosyl-L-methionine is bound by residues threonine 152, glycine 173, aspartate 195, and asparagine 237.

It belongs to the methyltransferase superfamily. PrmA family.

The protein resides in the cytoplasm. It carries out the reaction L-lysyl-[protein] + 3 S-adenosyl-L-methionine = N(6),N(6),N(6)-trimethyl-L-lysyl-[protein] + 3 S-adenosyl-L-homocysteine + 3 H(+). Its function is as follows. Methylates ribosomal protein L11. The polypeptide is Ribosomal protein L11 methyltransferase (Hamiltonella defensa subsp. Acyrthosiphon pisum (strain 5AT)).